A 255-amino-acid chain; its full sequence is uncharacterized protein (255 aa).

Residues 42-67 are disordered; it reads ACSGSPPEPGKGRPDTTPEQEVPVTA.

This is an uncharacterized protein from Mycobacterium tuberculosis (strain CDC 1551 / Oshkosh).